Here is a 270-residue protein sequence, read N- to C-terminus: Formamidopyrimidine-DNA glycosylase (270 aa).

P2 serves as the catalytic Schiff-base intermediate with DNA. The Proton donor role is filled by E3. The active-site Proton donor; for beta-elimination activity is K58. DNA-binding residues include H91, R110, and R151. The FPG-type zinc finger occupies 236–270 (FVYGRGGMPCKLCGTTLREAKLGQRASVYCPRCQR). Residue R260 is the Proton donor; for delta-elimination activity of the active site.

The protein belongs to the FPG family. As to quaternary structure, monomer. Zn(2+) serves as cofactor.

It catalyses the reaction Hydrolysis of DNA containing ring-opened 7-methylguanine residues, releasing 2,6-diamino-4-hydroxy-5-(N-methyl)formamidopyrimidine.. The catalysed reaction is 2'-deoxyribonucleotide-(2'-deoxyribose 5'-phosphate)-2'-deoxyribonucleotide-DNA = a 3'-end 2'-deoxyribonucleotide-(2,3-dehydro-2,3-deoxyribose 5'-phosphate)-DNA + a 5'-end 5'-phospho-2'-deoxyribonucleoside-DNA + H(+). Involved in base excision repair of DNA damaged by oxidation or by mutagenic agents. Acts as a DNA glycosylase that recognizes and removes damaged bases. Has a preference for oxidized purines, such as 7,8-dihydro-8-oxoguanine (8-oxoG). Has AP (apurinic/apyrimidinic) lyase activity and introduces nicks in the DNA strand. Cleaves the DNA backbone by beta-delta elimination to generate a single-strand break at the site of the removed base with both 3'- and 5'-phosphates. The polypeptide is Formamidopyrimidine-DNA glycosylase (Pseudomonas putida (strain W619)).